An 887-amino-acid polypeptide reads, in one-letter code: Alanine--tRNA ligase (887 aa).

His-564, His-568, Cys-676, and His-680 together coordinate Zn(2+). Positions 854-873 (GQGGGGRPDMAQSGGPKGNK) are disordered.

Belongs to the class-II aminoacyl-tRNA synthetase family. The cofactor is Zn(2+).

It is found in the cytoplasm. It catalyses the reaction tRNA(Ala) + L-alanine + ATP = L-alanyl-tRNA(Ala) + AMP + diphosphate. In terms of biological role, catalyzes the attachment of alanine to tRNA(Ala) in a two-step reaction: alanine is first activated by ATP to form Ala-AMP and then transferred to the acceptor end of tRNA(Ala). Also edits incorrectly charged Ser-tRNA(Ala) and Gly-tRNA(Ala) via its editing domain. This is Alanine--tRNA ligase from Bartonella henselae (strain ATCC 49882 / DSM 28221 / CCUG 30454 / Houston 1) (Rochalimaea henselae).